A 158-amino-acid polypeptide reads, in one-letter code: Methylated-DNA--protein-cysteine methyltransferase (158 aa).

Catalysis depends on Cys126, which acts as the Nucleophile; methyl group acceptor.

Belongs to the MGMT family.

It localises to the cytoplasm. The enzyme catalyses a 6-O-methyl-2'-deoxyguanosine in DNA + L-cysteinyl-[protein] = S-methyl-L-cysteinyl-[protein] + a 2'-deoxyguanosine in DNA. It catalyses the reaction a 4-O-methyl-thymidine in DNA + L-cysteinyl-[protein] = a thymidine in DNA + S-methyl-L-cysteinyl-[protein]. Functionally, involved in the cellular defense against the biological effects of O6-methylguanine (O6-MeG) and O4-methylthymine (O4-MeT) in DNA. Repairs the methylated nucleobase in DNA by stoichiometrically transferring the methyl group to a cysteine residue in the enzyme. This is a suicide reaction: the enzyme is irreversibly inactivated. The sequence is that of Methylated-DNA--protein-cysteine methyltransferase from Methanosarcina mazei (strain ATCC BAA-159 / DSM 3647 / Goe1 / Go1 / JCM 11833 / OCM 88) (Methanosarcina frisia).